The primary structure comprises 332 residues: uncharacterized protein (332 aa).

Positions 1 to 32 (MSRDRGARGLRKYGRFALATGAATALSLTASG) are cleaved as a signal peptide. C33 carries the N-palmitoyl cysteine lipid modification. The S-diacylglycerol cysteine moiety is linked to residue C33.

It is found in the cell membrane. This is an uncharacterized protein from Streptomyces avermitilis (strain ATCC 31267 / DSM 46492 / JCM 5070 / NBRC 14893 / NCIMB 12804 / NRRL 8165 / MA-4680).